A 110-amino-acid chain; its full sequence is Insulin (110 aa).

Positions 1-24 (MALWMRLLPLLVLLALWGPDPASA) are cleaved as a signal peptide. 3 cysteine pairs are disulfide-bonded: Cys-31-Cys-96, Cys-43-Cys-109, and Cys-95-Cys-100. Residues 57-87 (EAEDLQVGQVELGGGPGAGSLQPLALEGSLQ) constitute a propeptide, c peptide.

Belongs to the insulin family. As to quaternary structure, heterodimer of a B chain and an A chain linked by two disulfide bonds.

The protein resides in the secreted. Insulin decreases blood glucose concentration. It increases cell permeability to monosaccharides, amino acids and fatty acids. It accelerates glycolysis, the pentose phosphate cycle, and glycogen synthesis in liver. The protein is Insulin (INS) of Pan troglodytes (Chimpanzee).